A 470-amino-acid polypeptide reads, in one-letter code: Mucin-like protein 3 (470 aa).

A signal peptide spans 1-29; that stretch reads MAQMTSGLYPMFGFFICLLFLPASWEAGA. The Extracellular segment spans residues 30 to 401; the sequence is NTFQELQKTG…EGSNSFPAWA (372 aa). Disordered regions lie at residues 57–234 and 248–318; these read RALS…HTIP and TKEA…KAPE. Over residues 75 to 87 the composition is skewed to polar residues; sequence STATQKPKRQCNT. Asn-122 carries N-linked (GlcNAc...) asparagine glycosylation. A compositionally biased stretch (basic and acidic residues) spans 132–152; that stretch reads ARNERSADDHGSTNSEKRSDG. Residues 169–193 show a composition bias toward polar residues; it reads TRTSGTPVSSTETSTKLRTTSQKPE. A compositionally biased stretch (basic and acidic residues) spans 194-203; sequence TSSHDSDLIR. Polar residues predominate over residues 204 to 222; sequence KSTSLPVKSTEVSRTSYRT. The span at 260–273 shows a compositional bias: basic and acidic residues; that stretch reads KYERETRSASERIS. Polar residues predominate over residues 283–295; the sequence is HTPSAGETTTQVS. N-linked (GlcNAc...) asparagine glycosylation occurs at Asn-325. The chain crosses the membrane as a helical span at residues 402–422; that stretch reads IVVVILMAVIILLIFLGLIFL. At 423–470 the chain is on the cytoplasmic side; the sequence is VSCASRARHQLTQNSEDAEPEDKGGRNSYPVYLMEQQNLNLNQISSPP.

Its subcellular location is the cell membrane. The protein localises to the cytoplasm. May modulate NF-kappaB signaling and play a role in cell growth. The polypeptide is Mucin-like protein 3 (Rattus norvegicus (Rat)).